We begin with the raw amino-acid sequence, 267 residues long: 7alpha-hydroxysteroid dehydrogenase (267 aa).

Residues 13–18 (SATRGI), Arg-38, 63–64 (DA), and Asn-90 contribute to the NADP(+) site. Residues Ser-145 and Tyr-158 each contribute to the cholate site. NADP(+) is bound by residues Tyr-158, Lys-162, and 191-195 (IATDA). Tyr-158 functions as the Proton acceptor in the catalytic mechanism.

The protein belongs to the short-chain dehydrogenases/reductases (SDR) family. In terms of assembly, homotetramer.

It catalyses the reaction cholate + NADP(+) = 3alpha,12alpha-dihydroxy-7-oxo-5beta-cholanate + NADPH + H(+). The enzyme catalyses chenodeoxycholate + NADP(+) = 7-oxolithocholate + NADPH + H(+). In terms of biological role, 7alpha-hydroxysteroid dehydrogenase that catalyzes the NADP(+)-dependent oxidation of the 7alpha-hydroxy group of 7alpha-hydroxysteroids, such as the major human bile acids cholate and chenodeoxycholate, to the corresponding 7-oxosteroids. Is thus liley involved in the metabolism of primary bile acids. This chain is 7alpha-hydroxysteroid dehydrogenase, found in Paraclostridium sordellii (Clostridium sordellii).